The sequence spans 318 residues: Cytochrome f (318 aa).

Positions M1–A34 are cleaved as a signal peptide. Residues F35, C55, C58, and H59 each coordinate heme. A helical membrane pass occupies residues L284 to L303.

This sequence belongs to the cytochrome f family. As to quaternary structure, the 4 large subunits of the cytochrome b6-f complex are cytochrome b6, subunit IV (17 kDa polypeptide, petD), cytochrome f and the Rieske protein, while the 4 small subunits are PetG, PetL, PetM and PetN. The complex functions as a dimer. Heme serves as cofactor.

Its subcellular location is the plastid. The protein localises to the chloroplast thylakoid membrane. Component of the cytochrome b6-f complex, which mediates electron transfer between photosystem II (PSII) and photosystem I (PSI), cyclic electron flow around PSI, and state transitions. The sequence is that of Cytochrome f from Chaetosphaeridium globosum (Charophycean green alga).